Here is a 338-residue protein sequence, read N- to C-terminus: tRNA N6-adenosine threonylcarbamoyltransferase (338 aa).

The Fe cation site is built by histidine 111 and histidine 115. Residues 134–138 (LLSGG), aspartate 167, glycine 180, and asparagine 275 each bind substrate. Residue aspartate 304 coordinates Fe cation.

It belongs to the KAE1 / TsaD family. Requires Fe(2+) as cofactor.

The protein localises to the cytoplasm. The enzyme catalyses L-threonylcarbamoyladenylate + adenosine(37) in tRNA = N(6)-L-threonylcarbamoyladenosine(37) in tRNA + AMP + H(+). Required for the formation of a threonylcarbamoyl group on adenosine at position 37 (t(6)A37) in tRNAs that read codons beginning with adenine. Is involved in the transfer of the threonylcarbamoyl moiety of threonylcarbamoyl-AMP (TC-AMP) to the N6 group of A37, together with TsaE and TsaB. TsaD likely plays a direct catalytic role in this reaction. In Leptospira interrogans serogroup Icterohaemorrhagiae serovar copenhageni (strain Fiocruz L1-130), this protein is tRNA N6-adenosine threonylcarbamoyltransferase.